A 341-amino-acid chain; its full sequence is Ribulose-5-phosphate reductase 1 (341 aa).

Positions 38, 64, 65, and 144 each coordinate Zn(2+).

The protein belongs to the zinc-containing alcohol dehydrogenase family. Heterodimer together with TarI. Can also form a dimer of heterodimers. Zn(2+) is required as a cofactor.

The catalysed reaction is D-ribitol 5-phosphate + NADP(+) = D-ribulose 5-phosphate + NADPH + H(+). It functions in the pathway cell wall biogenesis; poly(ribitol phosphate) teichoic acid biosynthesis. Catalyzes the NADPH dependent reduction of D-ribulose 5-phosphate to D-ribitol 5-phosphate. The protein is Ribulose-5-phosphate reductase 1 of Staphylococcus aureus (strain NCTC 8325 / PS 47).